Reading from the N-terminus, the 73-residue chain is U3-agatoxin-Ao1k (73 aa).

Residues 1 to 20 (MRTIISLLLLSAMVFAVIEA) form the signal peptide. The propeptide occupies 21–34 (ISLEEGLQLFEGER). 4 cysteine pairs are disulfide-bonded: C36/C52, C43/C57, C51/C67, and C59/C65. S71 carries the serine amide modification.

This sequence belongs to the neurotoxin 07 (Beta/delta-agtx) family. 03 (aga-4) subfamily. Aga sub-subfamily. Expressed by the venom gland.

It localises to the secreted. In terms of biological role, insecticidal neurotoxin that modulates the insect Nav channel (DmNaV1/tipE (para/tipE)) in a unique manner, with both the activation and inactivation processes being affected. The voltage dependence of activation is shifted toward more hyperpolarized potentials (analogous to site 4 toxins) and a non-inactivating persistent sodium current is induced (site 3-like action). Interestingly, both effects take place in a voltage-dependent manner, producing a bell-shaped curve between -80 and 0 mV. Compared to beta/delta-agatoxin-1 to -3, this toxin appears to affect the insect sodium channel only weakly. The protein is U3-agatoxin-Ao1k of Agelena orientalis (Funnel-web spider).